Here is a 630-residue protein sequence, read N- to C-terminus: DELLA protein DWARF8 (630 aa).

Residues 1–35 are disordered; it reads MKREYQDAGGSGGDMGSSKDKMMAAAAGAGEQEEE. Residues 38–42 carry the DELLA motif motif; it reads DELLA. Residues 161 to 222 are disordered; it reads PIPSPVAAPS…AAPPATQASA (62 aa). Composition is skewed to low complexity over residues 165-176 and 191-222; these read PVAAPSADPSTD and TSSS…QASA. The GRAS domain occupies 234 to 623; the sequence is VDTQEAGIRL…RPLIATSAWR (390 aa). A leucine repeat I (LRI) region spans residues 241 to 297; sequence IRLVHALLACAEAVQQENFSAAEALVKQIPMLASSQGGAMRKVAAYFGEALARRVYR. The short motif at 248–252 is the LxCxE motif element; it reads LACAE. A VHIID region spans residues 316 to 381; it reads HAHFYESCPY…GGPPSFRLTG (66 aa). The VHIID motif lies at 347 to 351; sequence VHVVD. A leucine repeat II (LRII) region spans residues 395 to 427; that stretch reads QVGWKLAQFAHTIRVDFQYRGLVAATLADLEPF. A PFYRE region spans residues 443–544; the sequence is IAVNSVFELH…EVYLGRQICN (102 aa). Residues 451-455 carry the LXXLL motif motif; sequence LHRLL. Residues 547 to 623 form an SAW region; the sequence is ACEGAERTER…RPLIATSAWR (77 aa).

The protein belongs to the GRAS family. DELLA subfamily. Post-translationally, phosphorylated. Ubiquitinated. Upon GA application it is ubiquitinated, leading to its subsequent degradation.

The protein localises to the nucleus. Functionally, probable transcriptional regulator that acts as a repressor of the gibberellin (GA) signaling pathway. Probably acts by participating in large multiprotein complexes that repress transcription of GA-inducible genes. Upon GA application, it is degraded by the proteasome, allowing the GA signaling pathway. In Zea mays (Maize), this protein is DELLA protein DWARF8 (D8).